Consider the following 110-residue polypeptide: Envelope glycoprotein N (110 aa).

Positions methionine 1 to glycine 17 are cleaved as a signal peptide. Topologically, residues histidine 18–alanine 80 are virion surface. Residues valine 28–glycine 41 show a composition bias toward polar residues. Residues valine 28–threonine 51 are disordered. The chain crosses the membrane as a helical span at residues leucine 81–phenylalanine 101. Topologically, residues lysine 102–alanine 110 are intravirion.

It belongs to the herpesviridae glycoprotein N family. In terms of assembly, interacts (via N-terminus) with gM (via N-terminus). The gM-gN heterodimer forms the gCII complex. Post-translationally, O-glycosylated. Contains alpha 2,6-sialic acid residues. N-glycosylated.

The protein localises to the virion membrane. It localises to the host membrane. The protein resides in the host Golgi apparatus. Its subcellular location is the host trans-Golgi network. In terms of biological role, envelope glycoprotein necessary for proper maturation of gM and modulation of its membrane fusion activity. Also plays a critical role in virion morphogenesis. This chain is Envelope glycoprotein N, found in Homo sapiens (Human).